The sequence spans 347 residues: tRNA(Ile)-lysidine synthase (347 aa).

Residue 27–32 coordinates ATP; the sequence is SGGADS. Residues 243 to 263 are disordered; that stretch reads AAPASPSHVEGEASAPHDAAH.

The protein belongs to the tRNA(Ile)-lysidine synthase family.

It is found in the cytoplasm. The enzyme catalyses cytidine(34) in tRNA(Ile2) + L-lysine + ATP = lysidine(34) in tRNA(Ile2) + AMP + diphosphate + H(+). Functionally, ligates lysine onto the cytidine present at position 34 of the AUA codon-specific tRNA(Ile) that contains the anticodon CAU, in an ATP-dependent manner. Cytidine is converted to lysidine, thus changing the amino acid specificity of the tRNA from methionine to isoleucine. This Nitratidesulfovibrio vulgaris (strain ATCC 29579 / DSM 644 / CCUG 34227 / NCIMB 8303 / VKM B-1760 / Hildenborough) (Desulfovibrio vulgaris) protein is tRNA(Ile)-lysidine synthase.